Reading from the N-terminus, the 406-residue chain is Solanesyl diphosphate synthase 1, chloroplastic (406 aa).

Residues 1-71 (MMTSCRNIDL…NGIGQSQTVS (71 aa)) constitute a chloroplast transit peptide. Isopentenyl diphosphate contacts are provided by Lys-126, Arg-129, and His-164. Residues Asp-171 and Asp-175 each contribute to the Mg(2+) site. Arg-180 contributes to the an all-trans-polyprenyl diphosphate binding site. Residue Arg-181 coordinates isopentenyl diphosphate. 4 residues coordinate an all-trans-polyprenyl diphosphate: Lys-257, Thr-258, Gln-295, and Lys-312.

This sequence belongs to the FPP/GGPP synthase family. Homodimer. Interacts with FBN5. Requires Mg(2+) as cofactor. As to expression, higher expression in leaves than in roots.

The protein resides in the plastid. Its subcellular location is the chloroplast. The catalysed reaction is 5 isopentenyl diphosphate + (2E,6E,10E)-geranylgeranyl diphosphate = all-trans-nonaprenyl diphosphate + 5 diphosphate. It carries out the reaction isopentenyl diphosphate + (2E,6E)-farnesyl diphosphate = (2E,6E,10E)-geranylgeranyl diphosphate + diphosphate. Functionally, involved in providing solanesyl diphosphate for plastoquinone-9 (PQ-9) formation in plastids. Catalyzes the elongation of the prenyl side chain of PQ-9 in plastids. Contributes to the biosynthesis of plastochromanol-8 (PC-8) in plastids. Does not contribute to the synthesis of tocopherol or ubiquinone. PQ-9 and PC-8 are lipophilic antioxidants that act as protectant against photooxidative stress under high light stress conditions. Prefers geranylgeranyl diphosphate to farnesyl diphosphate as substrate. No activity with geranyl diphosphate or dimethylallyl diphosphate as substrate. This chain is Solanesyl diphosphate synthase 1, chloroplastic, found in Arabidopsis thaliana (Mouse-ear cress).